We begin with the raw amino-acid sequence, 236 residues long: Urease accessory protein UreF (236 aa).

The protein belongs to the UreF family. In terms of assembly, ureD, UreF and UreG form a complex that acts as a GTP-hydrolysis-dependent molecular chaperone, activating the urease apoprotein by helping to assemble the nickel containing metallocenter of UreC. The UreE protein probably delivers the nickel.

The protein localises to the cytoplasm. Its function is as follows. Required for maturation of urease via the functional incorporation of the urease nickel metallocenter. The sequence is that of Urease accessory protein UreF from Synechocystis sp. (strain ATCC 27184 / PCC 6803 / Kazusa).